A 325-amino-acid chain; its full sequence is Tetraacyldisaccharide 4'-kinase (325 aa).

Residue 55–62 coordinates ATP; the sequence is TAGGNGKT.

It belongs to the LpxK family.

It catalyses the reaction a lipid A disaccharide + ATP = a lipid IVA + ADP + H(+). The protein operates within glycolipid biosynthesis; lipid IV(A) biosynthesis; lipid IV(A) from (3R)-3-hydroxytetradecanoyl-[acyl-carrier-protein] and UDP-N-acetyl-alpha-D-glucosamine: step 6/6. Its function is as follows. Transfers the gamma-phosphate of ATP to the 4'-position of a tetraacyldisaccharide 1-phosphate intermediate (termed DS-1-P) to form tetraacyldisaccharide 1,4'-bis-phosphate (lipid IVA). The sequence is that of Tetraacyldisaccharide 4'-kinase from Citrobacter koseri (strain ATCC BAA-895 / CDC 4225-83 / SGSC4696).